The chain runs to 108 residues: Small ribosomal subunit protein bS16 (108 aa).

A disordered region spans residues 82-108 (ESKFSKNTQTENKKPVSKKTTKKSKDN). Residues 96-108 (PVSKKTTKKSKDN) show a composition bias toward basic residues.

It belongs to the bacterial ribosomal protein bS16 family.

This is Small ribosomal subunit protein bS16 from Mycoplasma mycoides subsp. mycoides SC (strain CCUG 32753 / NCTC 10114 / PG1).